A 38-amino-acid chain; its full sequence is Photosystem II reaction center protein Y (38 aa).

The helical transmembrane segment at 5-23 (VVVVLAPVIIAGSWAIFNI) threads the bilayer.

The protein belongs to the PsbY family. In terms of assembly, PSII is composed of 1 copy each of membrane proteins PsbA, PsbB, PsbC, PsbD, PsbE, PsbF, PsbH, PsbI, PsbJ, PsbK, PsbL, PsbM, PsbT, PsbX, PsbY, PsbZ, Psb30/Ycf12, peripheral proteins PsbO, CyanoQ (PsbQ), PsbU, PsbV and a large number of cofactors. It forms dimeric complexes.

It localises to the cellular thylakoid membrane. In terms of biological role, loosely associated component of the core of photosystem II (PSII), it is not always seen in crystals. PSII is a light-driven water plastoquinone oxidoreductase, using light energy to abstract electrons from H(2)O, generating a proton gradient subsequently used for ATP formation. The protein is Photosystem II reaction center protein Y of Picosynechococcus sp. (strain ATCC 27264 / PCC 7002 / PR-6) (Agmenellum quadruplicatum).